The following is a 123-amino-acid chain: Steroid Delta-isomerase (123 aa).

The active-site Proton donor is the Tyr12. The active-site Proton acceptor is the Asp36. Residue Asp96 coordinates substrate.

As to quaternary structure, homodimer.

The catalysed reaction is a 3-oxo-Delta(5)-steroid = a 3-oxo-Delta(4)-steroid. This chain is Steroid Delta-isomerase (ksdI), found in Nocardioides simplex (Arthrobacter simplex).